The sequence spans 265 residues: Cyclin-C (265 aa).

Residues 48–151 enclose the Cyclin N-terminal domain; that stretch reads IQVLGEQLKL…LLENLDCCLI (104 aa).

This sequence belongs to the cyclin family. Cyclin C subfamily. In terms of assembly, component of the Cdk8 module of the Mediator complex.

The protein localises to the nucleus. Its function is as follows. Component of the Mediator complex, a coactivator involved in regulated gene transcription of nearly all RNA polymerase II-dependent genes. Mediator functions as a bridge to convey information from gene-specific regulatory proteins to the basal RNA polymerase II transcription machinery. Mediator is recruited to promoters by direct interactions with regulatory proteins and serves as a scaffold for the assembly of a functional preinitiation complex with RNA polymerase II and the general transcription factors. Binds to and activates cyclin-dependent kinase Cdk8 that phosphorylates the CTD (C-terminal domain) of the large subunit of RNA polymerase II (RNAp II), which may inhibit the formation of a transcription initiation complex. This chain is Cyclin-C (CycC), found in Aedes aegypti (Yellowfever mosquito).